The primary structure comprises 459 residues: Disease resistance protein CHL1 (459 aa).

Positions 16 to 170 (REVDVFLSFC…QIARDISLVV (155 aa)) constitute a TIR domain. Residue Glu89 is part of the active site. An NB-ARC domain is found at 191–401 (VYDLLALEVN…LLKLKAKQGG (211 aa)). The segment covering 429-440 (ERKESSQDKSQQ) has biased composition (basic and acidic residues). Residues 429-459 (ERKESSQDKSQQESEVAADILIGKESSQDKQ) are disordered.

In terms of tissue distribution, mostly expressed in leaves, stems and roots, and, to a lower extent, in flowers and siliques.

It is found in the cytoplasm. The enzyme catalyses NAD(+) + H2O = ADP-D-ribose + nicotinamide + H(+). In terms of biological role, confers resistance to low temperatures by limiting chloroplast damage and cell death, thus maintaining growth homeostasis. This chain is Disease resistance protein CHL1, found in Arabidopsis thaliana (Mouse-ear cress).